The primary structure comprises 421 residues: Gamma-glutamyl phosphate reductase (421 aa).

It belongs to the gamma-glutamyl phosphate reductase family.

It is found in the cytoplasm. The catalysed reaction is L-glutamate 5-semialdehyde + phosphate + NADP(+) = L-glutamyl 5-phosphate + NADPH + H(+). It functions in the pathway amino-acid biosynthesis; L-proline biosynthesis; L-glutamate 5-semialdehyde from L-glutamate: step 2/2. Functionally, catalyzes the NADPH-dependent reduction of L-glutamate 5-phosphate into L-glutamate 5-semialdehyde and phosphate. The product spontaneously undergoes cyclization to form 1-pyrroline-5-carboxylate. In Dinoroseobacter shibae (strain DSM 16493 / NCIMB 14021 / DFL 12), this protein is Gamma-glutamyl phosphate reductase.